We begin with the raw amino-acid sequence, 361 residues long: Phospho-N-acetylmuramoyl-pentapeptide-transferase (361 aa).

10 helical membrane passes run 21–41, 69–89, 93–113, 131–151, 168–188, 200–220, 240–260, 264–284, 289–309, and 338–358; these read YLTI…LMLG, VGTP…SILI, WSNI…AIGF, SIKF…IILI, IILP…IVGS, GLAI…AYFS, LFII…FNAY, IFMG…IAIL, ILLF…IIQV, and KIIV…LASI.

It belongs to the glycosyltransferase 4 family. MraY subfamily. The cofactor is Mg(2+).

It is found in the cell inner membrane. It catalyses the reaction UDP-N-acetyl-alpha-D-muramoyl-L-alanyl-gamma-D-glutamyl-meso-2,6-diaminopimeloyl-D-alanyl-D-alanine + di-trans,octa-cis-undecaprenyl phosphate = di-trans,octa-cis-undecaprenyl diphospho-N-acetyl-alpha-D-muramoyl-L-alanyl-D-glutamyl-meso-2,6-diaminopimeloyl-D-alanyl-D-alanine + UMP. The protein operates within cell wall biogenesis; peptidoglycan biosynthesis. Its function is as follows. Catalyzes the initial step of the lipid cycle reactions in the biosynthesis of the cell wall peptidoglycan: transfers peptidoglycan precursor phospho-MurNAc-pentapeptide from UDP-MurNAc-pentapeptide onto the lipid carrier undecaprenyl phosphate, yielding undecaprenyl-pyrophosphoryl-MurNAc-pentapeptide, known as lipid I. The protein is Phospho-N-acetylmuramoyl-pentapeptide-transferase of Vesicomyosocius okutanii subsp. Calyptogena okutanii (strain HA).